We begin with the raw amino-acid sequence, 88 residues long: UPF0297 protein GK2555 (88 aa).

It belongs to the UPF0297 family.

This chain is UPF0297 protein GK2555, found in Geobacillus kaustophilus (strain HTA426).